A 92-amino-acid chain; its full sequence is Large ribosomal subunit protein bL25 (92 aa).

It belongs to the bacterial ribosomal protein bL25 family. As to quaternary structure, part of the 50S ribosomal subunit; part of the 5S rRNA/L5/L18/L25 subcomplex. Contacts the 5S rRNA. Binds to the 5S rRNA independently of L5 and L18.

This is one of the proteins that binds to the 5S RNA in the ribosome where it forms part of the central protuberance. The sequence is that of Large ribosomal subunit protein bL25 from Vibrio parahaemolyticus serotype O3:K6 (strain RIMD 2210633).